Reading from the N-terminus, the 182-residue chain is uncharacterized protein (182 aa).

The protein resides in the plastid. Its subcellular location is the cyanelle. This is an uncharacterized protein from Cyanophora paradoxa.